The chain runs to 707 residues: Heat shock protein hsp88 (707 aa).

Residues 662-692 (EAEKAAKKAEEEARKAKEAAEKAAQEGAKDD) show a composition bias toward basic and acidic residues. Residues 662-707 (EAEKAAKKAEEEARKAKEAAEKAAQEGAKDDEMTDADAPKPVVEEA) form a disordered region.

It belongs to the heat shock protein 70 family. Binds hsp30 independent of temperature or substrate. Post-translationally, the N-terminus is blocked.

The protein resides in the cytoplasm. The chain is Heat shock protein hsp88 (hsp88) from Neurospora crassa (strain ATCC 24698 / 74-OR23-1A / CBS 708.71 / DSM 1257 / FGSC 987).